The sequence spans 429 residues: Trigger factor (429 aa).

Positions 161–246 (GDRLSIDFKG…INEIASPKEL (86 aa)) constitute a PPIase FKBP-type domain.

Belongs to the FKBP-type PPIase family. Tig subfamily.

It localises to the cytoplasm. It catalyses the reaction [protein]-peptidylproline (omega=180) = [protein]-peptidylproline (omega=0). Involved in protein export. Acts as a chaperone by maintaining the newly synthesized protein in an open conformation. Functions as a peptidyl-prolyl cis-trans isomerase. This Vesicomyosocius okutanii subsp. Calyptogena okutanii (strain HA) protein is Trigger factor.